Here is a 331-residue protein sequence, read N- to C-terminus: Anthranilate phosphoribosyltransferase (331 aa).

5-phospho-alpha-D-ribose 1-diphosphate contacts are provided by residues Gly78, 81–82 (GD), Thr86, 88–91 (NVST), 106–114 (KHGNYSVSS), and Ser118. Gly78 serves as a coordination point for anthranilate. Ser90 is a Mg(2+) binding site. Anthranilate is bound at residue Asn109. Anthranilate is bound at residue Arg164. Mg(2+)-binding residues include Asp222 and Glu223.

The protein belongs to the anthranilate phosphoribosyltransferase family. In terms of assembly, homodimer. Requires Mg(2+) as cofactor.

It catalyses the reaction N-(5-phospho-beta-D-ribosyl)anthranilate + diphosphate = 5-phospho-alpha-D-ribose 1-diphosphate + anthranilate. It participates in amino-acid biosynthesis; L-tryptophan biosynthesis; L-tryptophan from chorismate: step 2/5. Functionally, catalyzes the transfer of the phosphoribosyl group of 5-phosphorylribose-1-pyrophosphate (PRPP) to anthranilate to yield N-(5'-phosphoribosyl)-anthranilate (PRA). In Haloferax volcanii (strain ATCC 29605 / DSM 3757 / JCM 8879 / NBRC 14742 / NCIMB 2012 / VKM B-1768 / DS2) (Halobacterium volcanii), this protein is Anthranilate phosphoribosyltransferase.